Consider the following 683-residue polypeptide: MALLGRLLPLALALALGPAATPAGPARSPYQLVLQHSRLRGRQHGPNVCAVQKLIGTNKKYFTNCKQWYQRKICGKSTVISYECCPGYEKVPGEKGCPAALPLSNLYETLGVVGATTTQLYTDRTEKLRPEMEGPGSFTIFAPSNEAWSSLPAEVLDSLVSNVNIELLNALRYHMVDRRVLTDELKHGMALTSMYQNSNIQIHHYPNGIVTVNCARLLKADHHATNGVVHLIDKVISTVTNNIQQIIEIEDTFETLRAAVAASGLNTLLEGDGQYTLLAPTNEAFEKIPAETLNRILGDPEALRDLLNNHILKSAMCAEAIVAGLSLETLEGTTLEVGCSGDMLTINGKPIISNKDVLATNGVIHFIDELLIPDSAKTLFELAADSDVSTAIDLFRQAGLSSHLSGNERLTLLAPMNSVFKDGTPPINARTKNLLLNHMIKDQLASKYLYHGQTLDTLGGRKLRVFVYRNSLCIENSCIAAHDKRGRYGTLFTMDRMLTPPMGTVMDVLKGDNRFSMLVAAIQSAGLTETLNREGVYTVFAPTNEAFQALPRGELNKLMGNAKELANILKYHVGDEILVSGGIGALVRLKSLQGDKLEVSSKNNVVSVNKEPVAEVDIMATNGVVHAISSVLQPPANRPQERGDELADSALEIFKQASAFSRATQSSVKLAPVYQRLLERMKH.

Positions methionine 1–alanine 23 are cleaved as a signal peptide. Serine 37 carries the post-translational modification Phosphoserine. In terms of domain architecture, EMI spans glycine 45–alanine 99. 5 disulfide bridges follow: cysteine 49/cysteine 85, cysteine 74/cysteine 339, cysteine 84/cysteine 97, cysteine 214/cysteine 317, and cysteine 473/cysteine 478. An S-cysteinyl cysteine modification is found at cysteine 65. FAS1 domains are found at residues leucine 103–isoleucine 236, threonine 240–leucine 371, serine 375–leucine 498, and methionine 502–leucine 632. The Cell attachment site motif lies at arginine 642–aspartate 644.

In terms of assembly, binds to type I, II, and IV collagens. Gamma-carboxylation is controversial. Gamma-carboxyglutamated; gamma-carboxyglutamate residues are formed by vitamin K dependent carboxylation; this may be required for calcium binding. According to a more recent report, does not contain vitamin K-dependent gamma-carboxyglutamate residues. In terms of processing, the EMI domain contains 2 expected intradomain disulfide bridges (Cys-49-Cys85 and Cys-84-Cys-97) and one unusual interdomain disulfide bridge to the second FAS1 domain (Cys-74-Cys-339). This arrangement violates the predicted disulfide bridge pattern of an EMI domain.

The protein resides in the secreted. It is found in the extracellular space. Its subcellular location is the extracellular matrix. Its function is as follows. Plays a role in cell adhesion. May play a role in cell-collagen interactions. The polypeptide is Transforming growth factor-beta-induced protein ig-h3 (TGFBI) (Bos taurus (Bovine)).